Reading from the N-terminus, the 232-residue chain is Ribonuclease P protein component 3 (232 aa).

Belongs to the eukaryotic/archaeal RNase P protein component 3 family. In terms of assembly, consists of a catalytic RNA component and at least 4-5 protein subunits.

The protein localises to the cytoplasm. It catalyses the reaction Endonucleolytic cleavage of RNA, removing 5'-extranucleotides from tRNA precursor.. Its function is as follows. Part of ribonuclease P, a protein complex that generates mature tRNA molecules by cleaving their 5'-ends. The protein is Ribonuclease P protein component 3 of Methanococcus maripaludis (strain C6 / ATCC BAA-1332).